Consider the following 70-residue polypeptide: UPF0270 protein VP2791 (70 aa).

The protein belongs to the UPF0270 family.

The sequence is that of UPF0270 protein VP2791 from Vibrio parahaemolyticus serotype O3:K6 (strain RIMD 2210633).